We begin with the raw amino-acid sequence, 70 residues long: uncharacterized protein (70 aa).

Positions 1–16 (MKLLLVLITLIIAALA) are cleaved as a signal peptide.

This is an uncharacterized protein from Orgyia pseudotsugata (Douglas-fir tussock moth).